The primary structure comprises 233 residues: MSDSAPEIETPVEEAPKAASPAKSPAKSPGRAKKAKKDGSDKPKKPKAIPTHPPVSEMVVNALKTLNEKGGSSVIAIKKFLVATYKVEIEKLLPFIKKFLKGAVLKGEVLQVKGTGASGSFKMPPPAKKVDRPESAPKKKATKTKTRVERKEKKVVAKKPKPAVEKKAAKPAAKKAAAKPAAKKAAAKPAAKKPAAKASPKKAAAKPKAKPTPKKSTPAKPKAAARKPAKKSK.

Disordered regions lie at residues 1–55 (MSDS…HPPV) and 115–233 (TGAS…KKSK). Residues 17-29 (KAASPAKSPAKSP) are compositionally biased toward low complexity. The H15 domain maps to 51–125 (THPPVSEMVV…GASGSFKMPP (75 aa)). 2 stretches are compositionally biased toward basic and acidic residues: residues 128–137 (KKVDRPESAP) and 146–155 (TRVERKEKKV). Composition is skewed to basic residues over residues 172 to 213 (AAKK…KPTP) and 223 to 233 (AAARKPAKKSK).

The protein belongs to the histone H1/H5 family.

Its subcellular location is the nucleus. The protein localises to the chromosome. In terms of biological role, histones H1 are necessary for the condensation of nucleosome chains into higher-order structures. This Glyptotendipes barbipes (Midge) protein is Histone H1-I.